The following is a 435-amino-acid chain: Tumor necrosis factor receptor superfamily member 3 (435 aa).

A signal peptide spans 1 to 30 (MLLPWATSAPGLAWGPLVLGLFGLLAASQP). Residues 31 to 227 (QAVPPYASEN…PPEMSGTMLM (197 aa)) lie on the Extracellular side of the membrane. Asparagine 40 carries an N-linked (GlcNAc...) asparagine glycan. 4 TNFR-Cys repeats span residues 42-81 (TCRD…TVCA), 82-124 (TCAE…KTQC), 125-168 (RCQP…NHCV), and 169-211 (PCKA…TTCK). Disulfide bonds link cysteine 43–cysteine 58, cysteine 59–cysteine 72, cysteine 62–cysteine 80, cysteine 83–cysteine 98, cysteine 101–cysteine 116, cysteine 104–cysteine 124, cysteine 126–cysteine 132, cysteine 139–cysteine 148, cysteine 142–cysteine 167, and cysteine 170–cysteine 185. An N-linked (GlcNAc...) asparagine glycan is attached at asparagine 177. Residues 228-248 (LAVLLPLAFFLLLATVFSCIW) traverse the membrane as a helical segment. Topologically, residues 249–435 (KSHPSLCRKL…GPRNQFITHD (187 aa)) are cytoplasmic. Position 323 is a phosphoserine (serine 323). Over residues 373–399 (PGPGDLPATPEPPYPIPEEGDPGPPGL) the composition is skewed to pro residues. Residues 373 to 435 (PGPGDLPATP…GPRNQFITHD (63 aa)) form a disordered region. The segment covering 403-417 (HQEDGKAWHLAETEH) has biased composition (basic and acidic residues). Over residues 421 to 435 (TPSNRGPRNQFITHD) the composition is skewed to polar residues.

In terms of assembly, self-associates; dimerization and trimerization are promoted by lymphotoxin (LTA(1)-LTB(2)). Associates with TRAF3. Associates with TRAF4. Associates with TRAF5. Interacts with Aedes aegypti lymphotoxin beta receptor inhibitor; the interaction reduces dimerization and trimerization of LTBR induced by lymphotoxin (LTA(1)-LTB(2)). As to quaternary structure, (Microbial infection) Interacts with HCV core protein.

It is found in the membrane. Its function is as follows. Receptor for the heterotrimeric lymphotoxin containing LTA and LTB, and for TNFS14/LIGHT. Activates NF-kappa-B signaling pathway upon stimulation with lymphotoxin (LTA(1)-LTB(2)). Promotes apoptosis via TRAF3 and TRAF5. May play a role in the development of lymphoid organs. The polypeptide is Tumor necrosis factor receptor superfamily member 3 (LTBR) (Homo sapiens (Human)).